The primary structure comprises 363 residues: Aminomethyltransferase (363 aa).

This sequence belongs to the GcvT family. As to quaternary structure, the glycine cleavage system is composed of four proteins: P, T, L and H.

The enzyme catalyses N(6)-[(R)-S(8)-aminomethyldihydrolipoyl]-L-lysyl-[protein] + (6S)-5,6,7,8-tetrahydrofolate = N(6)-[(R)-dihydrolipoyl]-L-lysyl-[protein] + (6R)-5,10-methylene-5,6,7,8-tetrahydrofolate + NH4(+). Its function is as follows. The glycine cleavage system catalyzes the degradation of glycine. This chain is Aminomethyltransferase, found in Staphylococcus aureus (strain N315).